A 356-amino-acid polypeptide reads, in one-letter code: UDP-N-acetylglucosamine--N-acetylmuramyl-(pentapeptide) pyrophosphoryl-undecaprenol N-acetylglucosamine transferase (356 aa).

UDP-N-acetyl-alpha-D-glucosamine contacts are provided by residues 12–14 (TGG), N124, R163, S188, I242, 261–266 (ALTVSE), and Q287.

Belongs to the glycosyltransferase 28 family. MurG subfamily.

The protein resides in the cell inner membrane. The enzyme catalyses di-trans,octa-cis-undecaprenyl diphospho-N-acetyl-alpha-D-muramoyl-L-alanyl-D-glutamyl-meso-2,6-diaminopimeloyl-D-alanyl-D-alanine + UDP-N-acetyl-alpha-D-glucosamine = di-trans,octa-cis-undecaprenyl diphospho-[N-acetyl-alpha-D-glucosaminyl-(1-&gt;4)]-N-acetyl-alpha-D-muramoyl-L-alanyl-D-glutamyl-meso-2,6-diaminopimeloyl-D-alanyl-D-alanine + UDP + H(+). Its pathway is cell wall biogenesis; peptidoglycan biosynthesis. Functionally, cell wall formation. Catalyzes the transfer of a GlcNAc subunit on undecaprenyl-pyrophosphoryl-MurNAc-pentapeptide (lipid intermediate I) to form undecaprenyl-pyrophosphoryl-MurNAc-(pentapeptide)GlcNAc (lipid intermediate II). The polypeptide is UDP-N-acetylglucosamine--N-acetylmuramyl-(pentapeptide) pyrophosphoryl-undecaprenol N-acetylglucosamine transferase (Ectopseudomonas mendocina (strain ymp) (Pseudomonas mendocina)).